A 105-amino-acid polypeptide reads, in one-letter code: Large ribosomal subunit protein uL24 (105 aa).

Belongs to the universal ribosomal protein uL24 family. In terms of assembly, part of the 50S ribosomal subunit.

Functionally, one of two assembly initiator proteins, it binds directly to the 5'-end of the 23S rRNA, where it nucleates assembly of the 50S subunit. One of the proteins that surrounds the polypeptide exit tunnel on the outside of the subunit. The chain is Large ribosomal subunit protein uL24 from Wolbachia sp. subsp. Brugia malayi (strain TRS).